The following is a 201-amino-acid chain: Receptor expression-enhancing protein 1 (201 aa).

2 helical membrane passes run 1 to 21 and 35 to 55; these read MVSW…YPAY and YVKW…ETFT. Ser152 carries the post-translational modification Phosphoserine. A disordered region spans residues 158-201; sequence TIRGDGAPAPSGPPPPGTGRSSGKHSQPKMSRSASESAGSSGTA. The segment covering 188–201 has biased composition (low complexity); sequence SRSASESAGSSGTA.

The protein belongs to the DP1 family. Interacts with OLFR992. Interacts with SPAST and ATL1. Interacts (via C-terminus) with microtubules. Interacts with ZFYVE27. As to expression, detected in olfactory sensory neurons of the olfactory epithelium, and in total brain.

The protein localises to the membrane. It is found in the mitochondrion membrane. The protein resides in the endoplasmic reticulum. Its function is as follows. Required for endoplasmic reticulum (ER) network formation, shaping and remodeling; it links ER tubules to the cytoskeleton. May also enhance the cell surface expression of odorant receptors. This Mus musculus (Mouse) protein is Receptor expression-enhancing protein 1 (Reep1).